The primary structure comprises 1068 residues: Phosphatidylinositol 4,5-bisphosphate 3-kinase catalytic subunit alpha isoform (1068 aa).

In terms of domain architecture, PI3K-ABD spans 16 to 105 (MPPRILVECL…QPFLKVIEPV (90 aa)). The region spanning 187–289 (KGQIIVVIWV…GRMPNLMLMA (103 aa)) is the PI3K-RBD domain. Residues 330 to 487 (INSALRIKIL…DWFSSVVKFP (158 aa)) form the C2 PI3K-type domain. The PIK helical domain maps to 517 to 694 (LARDNELREN…GLLLESYCRA (178 aa)). One can recognise a PI3K/PI4K catalytic domain in the interval 765 to 1051 (RLEECRIMSS…QMNDAHHGGW (287 aa)). The tract at residues 771–777 (IMSSAKR) is G-loop. The tract at residues 912–920 (GIGDRHNSN) is catalytic loop. An activation loop region spans residues 931–957 (HIDFGHFLDHKKKKFGYKRERVPFVLT).

The protein belongs to the PI3/PI4-kinase family. Heterodimer of a catalytic subunit PIK3CA and a p85 regulatory subunit (PIK3R1, PIK3R2 or PIK3R3). Interacts with IRS1 in nuclear extracts. Interacts with RUFY3. Interacts with RASD2. Interacts with APPL1. Interacts with HRAS and KRAS. Interaction with HRAS/KRAS is required for PI3K pathway signaling and cell proliferation stimulated by EGF and FGF2. Interacts with FAM83B; activates the PI3K/AKT signaling cascade.

The catalysed reaction is a 1,2-diacyl-sn-glycero-3-phospho-(1D-myo-inositol-4,5-bisphosphate) + ATP = a 1,2-diacyl-sn-glycero-3-phospho-(1D-myo-inositol-3,4,5-trisphosphate) + ADP + H(+). It catalyses the reaction a 1,2-diacyl-sn-glycero-3-phospho-(1D-myo-inositol) + ATP = a 1,2-diacyl-sn-glycero-3-phospho-(1D-myo-inositol-3-phosphate) + ADP + H(+). It carries out the reaction L-seryl-[protein] + ATP = O-phospho-L-seryl-[protein] + ADP + H(+). The enzyme catalyses 1,2-dioctanoyl-sn-glycero-3-phospho-(1D-myo-inositol-4,5-bisphosphate) + ATP = 1,2-dioctanoyl-sn-glycero-3-phospho-(1D-myo-inositol-3,4,5-trisphosphate) + ADP + H(+). The catalysed reaction is 1-octadecanoyl-2-(5Z,8Z,11Z,14Z)-eicosatetraenoyl-sn-glycero-3-phospho-1D-myo-inositol 4,5-bisphosphate + ATP = 1-octadecanoyl-2-(5Z,8Z,11Z,14Z-eicosatetraenoyl)-sn-glycero-3-phospho-(1D-myo-inositol 3,4,5-triphosphate) + ADP + H(+). It functions in the pathway phospholipid metabolism; phosphatidylinositol phosphate biosynthesis. Functionally, phosphoinositide-3-kinase (PI3K) phosphorylates phosphatidylinositol (PI) and its phosphorylated derivatives at position 3 of the inositol ring to produce 3-phosphoinositides. Uses ATP and PtdIns(4,5)P2 (phosphatidylinositol 4,5-bisphosphate) to generate phosphatidylinositol 3,4,5-trisphosphate (PIP3). PIP3 plays a key role by recruiting PH domain-containing proteins to the membrane, including AKT1 and PDPK1, activating signaling cascades involved in cell growth, survival, proliferation, motility and morphology. Participates in cellular signaling in response to various growth factors. Involved in the activation of AKT1 upon stimulation by receptor tyrosine kinases ligands such as EGF, insulin, IGF1, VEGFA and PDGF. Involved in signaling via insulin-receptor substrate (IRS) proteins. Essential in endothelial cell migration during vascular development through VEGFA signaling, possibly by regulating RhoA activity. Required for lymphatic vasculature development, possibly by binding to RAS and by activation by EGF and FGF2, but not by PDGF. Regulates invadopodia formation through the PDPK1-AKT1 pathway. Participates in cardiomyogenesis in embryonic stem cells through a AKT1 pathway. Participates in vasculogenesis in embryonic stem cells through PDK1 and protein kinase C pathway. Also has serine-protein kinase activity: phosphorylates PIK3R1 (p85alpha regulatory subunit), EIF4EBP1 and HRAS. Plays a role in the positive regulation of phagocytosis and pinocytosis. The sequence is that of Phosphatidylinositol 4,5-bisphosphate 3-kinase catalytic subunit alpha isoform (Pik3ca) from Mus musculus (Mouse).